Here is an 862-residue protein sequence, read N- to C-terminus: Protein argonaute-2 (862 aa).

The PAZ domain occupies 232–351 (PVIEFMCEVL…LPLEVCNIVA (120 aa)). 2 interaction with guide RNA regions span residues 314–319 (YFKDRH) and 527–569 (GKTP…LCLK). A Piwi domain is found at 520–821 (LVVVILPGKT…VAFRARYHLV (302 aa)). Residues 590-593 (FQQP) form an interaction with GW182 family members region. An a divalent metal cation-binding site is contributed by aspartate 600. An interaction with GW182 family members region spans residues 653 to 663 (LIQFYKSTRFK). Aspartate 672 lines the a divalent metal cation pocket. 3 interaction with guide RNA regions span residues 712-713 (KR), 756-764 (HAGIQGTSR), and 793-815 (YVRC…VAFR). Histidine 810 is an a divalent metal cation binding site. A disordered region spans residues 825 to 847 (HDSAEGSHTSGQSNGRDQQALAK). Polar residues predominate over residues 830 to 841 (GSHTSGQSNGRD).

Belongs to the argonaute family. Ago subfamily. As to quaternary structure, component of the RISC loading complex (RLC), or micro-RNA (miRNA) loading complex (miRLC), which is composed of dicer1, ago2 and tarbp2. Note that the trimeric RLC/miRLC is also referred to as RISC. Mg(2+) is required as a cofactor. The cofactor is Mn(2+).

Its subcellular location is the cytoplasm. It localises to the P-body. It carries out the reaction Endonucleolytic cleavage to 5'-phosphomonoester.. Its function is as follows. Required for RNA-mediated gene silencing (RNAi) by the RNA-induced silencing complex (RISC). The 'minimal RISC' appears to include ago2 bound to a short guide RNA such as a microRNA (miRNA) or short interfering RNA (siRNA). These guide RNAs direct RISC to complementary mRNAs that are targets for RISC-mediated gene silencing. The precise mechanism of gene silencing depends on the degree of complementarity between the miRNA or siRNA and its target. Binding of RISC to a perfectly complementary mRNA generally results in silencing due to endonucleolytic cleavage of the mRNA specifically by ago2. Binding of RISC to a partially complementary mRNA results in silencing through inhibition of translation, and this is independent of endonuclease activity. The inhibition of translational initiation leads to the accumulation of the affected mRNA in cytoplasmic processing bodies (P-bodies), where mRNA degradation may subsequently occur. The protein is Protein argonaute-2 (ago2) of Xenopus laevis (African clawed frog).